The chain runs to 228 residues: 2-C-methyl-D-erythritol 4-phosphate cytidylyltransferase (228 aa).

It belongs to the IspD/TarI cytidylyltransferase family. IspD subfamily.

The enzyme catalyses 2-C-methyl-D-erythritol 4-phosphate + CTP + H(+) = 4-CDP-2-C-methyl-D-erythritol + diphosphate. Its pathway is isoprenoid biosynthesis; isopentenyl diphosphate biosynthesis via DXP pathway; isopentenyl diphosphate from 1-deoxy-D-xylulose 5-phosphate: step 2/6. Catalyzes the formation of 4-diphosphocytidyl-2-C-methyl-D-erythritol from CTP and 2-C-methyl-D-erythritol 4-phosphate (MEP). The sequence is that of 2-C-methyl-D-erythritol 4-phosphate cytidylyltransferase from Nostoc sp. (strain PCC 7120 / SAG 25.82 / UTEX 2576).